Here is a 256-residue protein sequence, read N- to C-terminus: Small ribosomal subunit protein uS2 (256 aa).

It belongs to the universal ribosomal protein uS2 family.

This chain is Small ribosomal subunit protein uS2, found in Ruegeria sp. (strain TM1040) (Silicibacter sp.).